A 611-amino-acid chain; its full sequence is MNNQYNWNLEVLLNGKSLADNFTELKQLSEQEKALYDGGACFQTKAKFTEFLQLQEKIEVLENRYSNFLSNKHAENSLDKTINDALFQYEMFKSEHALVFVDFEKNLFKHEKVIRAYLQDPALKQYQRDFELVWRNKKHQIDPASQKLLAQISPAWNQADKIFNVLSTADLNLQPVVYKGKTYVINAVSDYQSLLENKDRGLREAAYKVWLEIYWPTRNTLSVSLVENYIQLETFAKLKKHPNYIAKTAFDDEIDVAFIDFVYEQVASFAPTFKAFQSLRKQIYKHVLKLDKAQPWDLSVPLFKASGDYTIEQAQTDALKILAPMGSEYLEVVKEAFRERWISWLPDKNKYTGAYSISNVKGLDHYFILMNFDKTRASLNTLVHELGHSVHSWYASKYQTQNLDPTIFYAEIASICNELLLCYHDIINYENRNPQQLIRSLMEQISHFFGATTRQLMFSQFEQDTLKLIQQNQKPDFKTLVEIYGKTAIKYQAANADAITKKLKQTKYQKSLAYITSIPHFYAGNFYVYKYAIGQVVGTLVGKKLSAGDSNMLAAYKRFLSSGSTLPPLETIKLLGIDLTQPEPWQEAHAELKRWIKLVQTAFKQLQHKKR.

Position 384 (H384) interacts with Zn(2+). Residue E385 is part of the active site. Zn(2+)-binding residues include H388 and H391.

The protein belongs to the peptidase M3B family. Requires Zn(2+) as cofactor.

The polypeptide is Oligoendopeptidase F homolog (pepF) (Mycoplasma pneumoniae (strain ATCC 29342 / M129 / Subtype 1) (Mycoplasmoides pneumoniae)).